We begin with the raw amino-acid sequence, 285 residues long: Iron uptake system component EfeM (285 aa).

Positions 1 to 34 are cleaved as a signal peptide; sequence MTYPLLTRKTLMKKTPLALLLTLGLLQTPLAAFA.

The protein belongs to the EfeM/EfeO family. In terms of assembly, component of the iron transporter efeUOB/M complex composed of EfeU, EfeM and EfeB.

Its subcellular location is the periplasm. In terms of biological role, part of the iron transporter system efeUOB/M involved in iron import. Specifically binds Fe(3+), which is produced by EfeB-mediated oxidation of Fe(2+), and delivers it to the cell inner membrane permease EfeU. Also binds Zn(2+) and Cu(2+) in vitro. The chain is Iron uptake system component EfeM from Pseudomonas syringae pv. syringae (strain B728a).